The sequence spans 379 residues: Lipid-A-disaccharide synthase (379 aa).

Belongs to the LpxB family.

The enzyme catalyses a lipid X + a UDP-2-N,3-O-bis[(3R)-3-hydroxyacyl]-alpha-D-glucosamine = a lipid A disaccharide + UDP + H(+). The protein operates within bacterial outer membrane biogenesis; LPS lipid A biosynthesis. Condensation of UDP-2,3-diacylglucosamine and 2,3-diacylglucosamine-1-phosphate to form lipid A disaccharide, a precursor of lipid A, a phosphorylated glycolipid that anchors the lipopolysaccharide to the outer membrane of the cell. In Vibrio parahaemolyticus serotype O3:K6 (strain RIMD 2210633), this protein is Lipid-A-disaccharide synthase.